A 392-amino-acid polypeptide reads, in one-letter code: Pyoverdine export membrane fusion protein PvdR (392 aa).

A signal peptide (tat-type signal) is located at residues 1–36 (MRRSTHTRRRLLLGGLGLLGLGSLLAWTSLPFGAQP). A coiled-coil region spans residues 109–181 (IDNLKAQLAE…NASLRSDEAE (73 aa)). The disordered stretch occupies residues 267–286 (PPKPLDQTSQGGGSPASATA).

This sequence belongs to the membrane fusion protein (MFP) (TC 8.A.1) family. In terms of assembly, part of the tripartite efflux system PvdRT-OpmQ, which is composed of an inner membrane component with both ATPase and permease domains, PvdT, a periplasmic membrane fusion protein, PvdR, and an outer membrane component, OpmQ. Post-translationally, predicted to be exported by the Tat system. The position of the signal peptide cleavage has not been experimentally proven.

Its subcellular location is the periplasm. Part of the tripartite efflux system PvdRT-OpmQ required for the secretion into the extracellular milieu of the siderophore pyoverdine (PVD), which is involved in iron acquisition. This subunit is an adapter protein that stimulates the ATPase activity of PvdT and connects the inner and outer membrane components. The system is responsible for export of newly synthesized PVD after the final steps of biosynthesis have taken place in the periplasm. It is also responsible for recycling of PVD after internalization of ferri-PVD into the periplasm by the outer-membrane receptor FpvA and release of iron from PVD, thus making PVD available for new cycles of iron uptake. Contributes to resistance against ampicillin. This chain is Pyoverdine export membrane fusion protein PvdR, found in Pseudomonas putida (strain ATCC 47054 / DSM 6125 / CFBP 8728 / NCIMB 11950 / KT2440).